Here is a 318-residue protein sequence, read N- to C-terminus: Ethylene-responsive transcription factor FZP (318 aa).

A compositionally biased stretch (low complexity) spans 1 to 15 (MNTRGSGSSSSSSSS). Disordered regions lie at residues 1–59 (MNTR…GRFL) and 158–178 (SYGH…SGAS). The span at 25–37 (PPKPASQPSPPSS) shows a compositional bias: pro residues. The segment at residues 57–114 (RFLGVRRRPWGRYAAEIRDPTTKERHWLGTFDTAQEAALAYDRAALSMKGAQARTNFV) is a DNA-binding region (AP2/ERF). The span at 160-171 (GHHHHHHHHHGH) shows a compositional bias: basic residues.

Belongs to the AP2/ERF transcription factor family. ERF subfamily.

It localises to the nucleus. Functionally, required to prevent the formation of axillary meristems within the spikelet meristem and permit the subsequent establishment of floral meristem identity. Mediates the transition from spikelet to floret meristem. Determines the transition from panicle branching to spikelet formation. May specify floral organ identity by regulating the class B genes (Agamous-like genes) MADS6 and MADS17, as well as class E genes MADS1, MADS7 and MADS8 in floral meristem. Possesses transactivation activity. The sequence is that of Ethylene-responsive transcription factor FZP from Oryza sativa subsp. japonica (Rice).